A 75-amino-acid polypeptide reads, in one-letter code: Sec-independent protein translocase protein TatA (75 aa).

The helical transmembrane segment at 1 to 21 (MGSFSIWHWLVVLAIVLLVFG) threads the bilayer. A disordered region spans residues 40–75 (KKGMRDEDKPNAQLGDESRSQDASRTAQDEHDRTPR).

The protein belongs to the TatA/E family. The Tat system comprises two distinct complexes: a TatABC complex, containing multiple copies of TatA, TatB and TatC subunits, and a separate TatA complex, containing only TatA subunits. Substrates initially bind to the TatABC complex, which probably triggers association of the separate TatA complex to form the active translocon.

It localises to the cell inner membrane. Its function is as follows. Part of the twin-arginine translocation (Tat) system that transports large folded proteins containing a characteristic twin-arginine motif in their signal peptide across membranes. TatA could form the protein-conducting channel of the Tat system. In Stenotrophomonas maltophilia (strain R551-3), this protein is Sec-independent protein translocase protein TatA.